Reading from the N-terminus, the 442-residue chain is Protein PhoH2 (442 aa).

Residues 3 to 135 (KIYVLDTNVL…LVSKDVLVRV (133 aa)) form the PINc domain. 259–266 (GKAGTGKT) serves as a coordination point for ATP.

The protein in the N-terminal section; belongs to the PINc/VapC protein family. This sequence in the C-terminal section; belongs to the PhoH family.

It carries out the reaction n ATP + n H2O + wound RNA = n ADP + n phosphate + unwound RNA.. The catalysed reaction is ATP + H2O = ADP + phosphate + H(+). The enzyme catalyses GTP + H2O = GDP + phosphate + H(+). Unwinds and/or cleaves 5'-tailed RNA in vitro. Has ATPase and GTPase activities. Unlike the protein in mycobacteria there does not seem to be an antitoxin gene upstream, suggesting this is not a toxin-antitoxin system. This Bacillus subtilis (strain 168) protein is Protein PhoH2.